The primary structure comprises 417 residues: C4-dicarboxylate transport protein (417 aa).

Transmembrane regions (helical) follow at residues 4–26 (IYVQ…PQIG), 41–60 (KLVI…ARMG), 72–94 (ALIY…GRLI), 137–159 (FIGA…TGFA), 180–202 (LFFG…AMGF), 217–239 (ALVA…GIAW), 285–307 (VVGL…YMTL), and 347–369 (FITL…AILV).

This sequence belongs to the dicarboxylate/amino acid:cation symporter (DAACS) (TC 2.A.23) family.

It localises to the cell inner membrane. Responsible for the transport of dicarboxylates such as succinate, fumarate, and malate from the periplasm across the membrane. This chain is C4-dicarboxylate transport protein, found in Caulobacter vibrioides (strain ATCC 19089 / CIP 103742 / CB 15) (Caulobacter crescentus).